The sequence spans 844 residues: Striatin-interacting proteins 2 (844 aa).

The segment covering 1 to 18 has biased composition (low complexity); the sequence is MDDPAAPGPAGSPANDNG. Positions 1 to 58 are disordered; sequence MDDPAAPGPAGSPANDNGNGNGNGNGNGNGGKGKPAVPKGRETFRNQRRESEGSVDCP. The segment covering 19 to 33 has biased composition (gly residues); sequence NGNGNGNGNGNGGKG. A compositionally biased stretch (basic and acidic residues) spans 39-52; sequence KGRETFRNQRRESE. 3 positions are modified to phosphoserine: serine 328, serine 339, and serine 364. The disordered stretch occupies residues 331 to 355; that stretch reads SYTLDLGESQLAPPPSKLRGRRGSR. A disordered region spans residues 370–422; it reads ERDLFKTEEPATEEEEESAADGERTLDGELDLLEQDPLVPPPPSQTPLSTDRV. Positions 379–389 are enriched in acidic residues; sequence PATEEEEESAA.

It belongs to the STRIP family. Part of the core of STRIPAK complexes composed of PP2A catalytic and scaffolding subunits, the striatins (PP2A regulatory subunits), the striatin-associated proteins MOB4, STRIP1 and STRIP2, PDCD10 and members of the STE20 kinases, such as STK24 and STK26. Interacts with CTTNBP2NL.

It is found in the cytoplasm. Plays a role in the regulation of cell morphology and cytoskeletal organization. Required in the control of cell shape. Calmodulin-binding scaffolding protein which is the center of the striatin-interacting phosphatase and kinase (STRIPAK) complexes. STRIPAK complexes have critical roles in protein (de)phosphorylation and are regulators of multiple signaling pathways including Hippo, MAPK, nuclear receptor and cytoskeleton remodeling. Different types of STRIPAK complexes are involved in a variety of biological processes such as cell growth, differentiation, apoptosis, metabolism and immune regulation. The chain is Striatin-interacting proteins 2 (Strip2) from Mus musculus (Mouse).